We begin with the raw amino-acid sequence, 292 residues long: Ribosomal protein L11 methyltransferase (292 aa).

S-adenosyl-L-methionine-binding residues include Thr-144, Gly-165, Asp-187, and Asn-229.

Belongs to the methyltransferase superfamily. PrmA family.

It is found in the cytoplasm. It catalyses the reaction L-lysyl-[protein] + 3 S-adenosyl-L-methionine = N(6),N(6),N(6)-trimethyl-L-lysyl-[protein] + 3 S-adenosyl-L-homocysteine + 3 H(+). Its function is as follows. Methylates ribosomal protein L11. The sequence is that of Ribosomal protein L11 methyltransferase from Pseudomonas syringae pv. tomato (strain ATCC BAA-871 / DC3000).